A 348-amino-acid chain; its full sequence is Rhodopsin (348 aa).

Met-1 is modified (N-acetylmethionine). Topologically, residues 1 to 36 (MNGTEGPNFYVPFSNATGVVRSPFEYPQYYLAEPWQ) are extracellular. Asn-2 and Asn-15 each carry an N-linked (GlcNAc...) asparagine glycan. A helical transmembrane segment spans residues 37–61 (FSMLAAYMFLLIVLGFPINFLTLYV). Residues 62-73 (TVQHKKLRTPLN) are Cytoplasmic-facing. Residues 74 to 96 (YILLNLAVADLFMVFGGFTTTLY) form a helical membrane-spanning segment. Over 97–110 (TSLHGYFVFGPTGC) the chain is Extracellular. Residues Cys-110 and Cys-187 are joined by a disulfide bond. Residues 111–133 (NAEGFFATLGGEIALWSLVVLAI) traverse the membrane as a helical segment. The short motif at 134–136 (ERY) is the 'Ionic lock' involved in activated form stabilization element. Over 134 to 152 (ERYVVVCKPMSNFRFGENH) the chain is Cytoplasmic. A helical membrane pass occupies residues 153–173 (AIMGVAFTWVMALACAAPPLF). The Extracellular portion of the chain corresponds to 174–202 (GWSRYIPEGLQCSCGIDYYTLKPEVNNES). Residue Glu-201 participates in Zn(2+) binding. Residues 203 to 224 (FVIYMFVVHFTIPMIVIFFCYG) traverse the membrane as a helical segment. Topologically, residues 225-252 (QLVFTVKEARAQQQESATTQKAEKEVTR) are cytoplasmic. The chain crosses the membrane as a helical span at residues 253–274 (MVIIMVIAFLICWVPYASVAFY). Residues 275–286 (IFTHQGSNFGPI) lie on the Extracellular side of the membrane. Zn(2+) is bound at residue Gln-279. Residues 287-308 (FMTIPAFFAKSASIYNPVIYIM) traverse the membrane as a helical segment. At Lys-296 the chain carries N6-(retinylidene)lysine. The Cytoplasmic portion of the chain corresponds to 309–348 (MNKQFRNCMLTTICCGKNPLGDDEASATVSKTETSQVAPA). Residues Cys-322 and Cys-323 are each lipidated (S-palmitoyl cysteine). The interval 330 to 348 (DDEASATVSKTETSQVAPA) is interaction with SAG. Position 334 is a phosphoserine (Ser-334). Phosphothreonine is present on Thr-336. Ser-338 carries the phosphoserine modification. Thr-340 and Thr-342 each carry phosphothreonine. Ser-343 carries the post-translational modification Phosphoserine.

It belongs to the G-protein coupled receptor 1 family. Opsin subfamily. In terms of assembly, homodimer. May form a complex composed of RHO, GRK1 and RCVRN in a Ca(2+)-dependent manner; RCVRN prevents the interaction between GRK1 and RHO. Interacts with GRK1. Interacts (phosphorylated form) with SAG. Interacts with GNAT1. Interacts with GNAT3. SAG and G-proteins compete for a common binding site. Interacts with PRCD; the interaction promotes PRCD stability. Forms a complex with ASAP1 and ARF4. Forms a complex with ASAP1, RAB11A, Rabin8/RAB3IP, ARF4 and RAB11FIP3; the complex regulates Golgi-to-cilia rhodopsin/RHO transport in photoreceptors. In terms of processing, phosphorylated on some or all of the serine and threonine residues present in the C-terminal region. Post-translationally, contains one covalently linked retinal chromophore. Upon light absorption, the covalently bound 11-cis-retinal is converted to all-trans-retinal. After hydrolysis of the Schiff base and release of the covalently bound all-trans-retinal, active rhodopsin is regenerated by binding of a fresh molecule of 11-cis-retinal.

The protein localises to the membrane. Its subcellular location is the cell projection. It is found in the cilium. It localises to the photoreceptor outer segment. Photoreceptor required for image-forming vision at low light intensity. Required for photoreceptor cell viability after birth. Light-induced isomerization of 11-cis to all-trans retinal triggers a conformational change that activates signaling via G-proteins. Subsequent receptor phosphorylation mediates displacement of the bound G-protein alpha subunit by the arrestin SAG and terminates signaling. This is Rhodopsin (RHO) from Macaca fascicularis (Crab-eating macaque).